Consider the following 65-residue polypeptide: Small ribosomal subunit protein bS21 (65 aa).

The tract at residues 44–65 (DDRLKRSRGKRRAQRANEERNS) is disordered. Residues 48–57 (KRSRGKRRAQ) show a composition bias toward basic residues.

This sequence belongs to the bacterial ribosomal protein bS21 family.

This is Small ribosomal subunit protein bS21 from Prosthecochloris aestuarii (strain DSM 271 / SK 413).